Consider the following 416-residue polypeptide: Serine hydroxymethyltransferase (416 aa).

Residues leucine 121 and 125-127 (GHL) each bind (6S)-5,6,7,8-tetrahydrofolate. Lysine 230 is modified (N6-(pyridoxal phosphate)lysine).

The protein belongs to the SHMT family. Homodimer. Pyridoxal 5'-phosphate is required as a cofactor.

It localises to the cytoplasm. The catalysed reaction is (6R)-5,10-methylene-5,6,7,8-tetrahydrofolate + glycine + H2O = (6S)-5,6,7,8-tetrahydrofolate + L-serine. The protein operates within one-carbon metabolism; tetrahydrofolate interconversion. Its pathway is amino-acid biosynthesis; glycine biosynthesis; glycine from L-serine: step 1/1. Its function is as follows. Catalyzes the reversible interconversion of serine and glycine with tetrahydrofolate (THF) serving as the one-carbon carrier. This reaction serves as the major source of one-carbon groups required for the biosynthesis of purines, thymidylate, methionine, and other important biomolecules. Also exhibits THF-independent aldolase activity toward beta-hydroxyamino acids, producing glycine and aldehydes, via a retro-aldol mechanism. This is Serine hydroxymethyltransferase from Nitrosomonas europaea (strain ATCC 19718 / CIP 103999 / KCTC 2705 / NBRC 14298).